Consider the following 383-residue polypeptide: Homeobox protein knotted-1-like 5 (383 aa).

2 disordered regions span residues 1 to 35 and 52 to 73; these read MSFN…HFSE and TTAD…ADTN. Positions 281 to 301 constitute an ELK domain; it reads ELKHELKQGFKEKIVDIREEI. A DNA-binding region (homeobox; TALE-type) is located at residues 302–365; it reads MRKRRAGKLP…NQRKRNWNSN (64 aa). Positions 361–383 are disordered; sequence NWNSNSSTSSTLTKNKRKRTGKS. Residues 362 to 373 show a composition bias toward low complexity; the sequence is WNSNSSTSSTLT. Residues 374–383 show a composition bias toward basic residues; sequence KNKRKRTGKS.

It belongs to the TALE/KNOX homeobox family. As to quaternary structure, may form heterodimeric complex with the TALE/BELL protein BEL1, BLH1 and BLH2. Interacts with OFP1, OFP2, OFP3 and OFP4.

It localises to the nucleus. The sequence is that of Homeobox protein knotted-1-like 5 (KNAT5) from Arabidopsis thaliana (Mouse-ear cress).